The chain runs to 414 residues: Glutamyl-tRNA reductase (414 aa).

Residues 51–54, serine 107, 112–114, and glutamine 118 each bind substrate; these read TCNR and EYE. Cysteine 52 functions as the Nucleophile in the catalytic mechanism. Residue 187 to 192 participates in NADP(+) binding; it reads GAGEIG.

It belongs to the glutamyl-tRNA reductase family. Homodimer.

The enzyme catalyses (S)-4-amino-5-oxopentanoate + tRNA(Glu) + NADP(+) = L-glutamyl-tRNA(Glu) + NADPH + H(+). It functions in the pathway porphyrin-containing compound metabolism; protoporphyrin-IX biosynthesis; 5-aminolevulinate from L-glutamyl-tRNA(Glu): step 1/2. Catalyzes the NADPH-dependent reduction of glutamyl-tRNA(Glu) to glutamate 1-semialdehyde (GSA). The polypeptide is Glutamyl-tRNA reductase (Sulfolobus acidocaldarius (strain ATCC 33909 / DSM 639 / JCM 8929 / NBRC 15157 / NCIMB 11770)).